An 878-amino-acid polypeptide reads, in one-letter code: Outer membrane usher protein FimD (878 aa).

An N-terminal signal peptide occupies residues 1–45 (MSYLNLRLYQRNTQCLHIRKHRLAGFFVRLVVACAFAAQAPLSSA). Cysteine 855 and cysteine 877 are joined by a disulfide.

This sequence belongs to the fimbrial export usher family.

It localises to the cell outer membrane. Involved in the export and assembly of FimA fimbrial subunits across the outer membrane. The chain is Outer membrane usher protein FimD (fimD) from Escherichia coli (strain K12).